Consider the following 526-residue polypeptide: Adenylosuccinate synthetase (526 aa).

GTP-binding positions include 102–108 (GDEGKGK) and 130–132 (GHT). D103 serves as the catalytic Proton acceptor. Residues D103 and G130 each coordinate Mg(2+). Residues 103-106 (DEGK), 128-131 (NAGH), T219, R233, N310, T325, and R392 contribute to the IMP site. H131 serves as the catalytic Proton donor. 388–394 (TTTGRTR) provides a ligand contact to substrate. GTP-binding positions include R394, 420–422 (KVD), and 502–504 (GVG).

The protein belongs to the adenylosuccinate synthetase family. Homodimer. The cofactor is Mg(2+).

The protein resides in the cytoplasm. The catalysed reaction is IMP + L-aspartate + GTP = N(6)-(1,2-dicarboxyethyl)-AMP + GDP + phosphate + 2 H(+). The protein operates within purine metabolism; AMP biosynthesis via de novo pathway; AMP from IMP: step 1/2. Functionally, plays an important role in the de novo pathway and in the salvage pathway of purine nucleotide biosynthesis. Catalyzes the first committed step in the biosynthesis of AMP from IMP. The chain is Adenylosuccinate synthetase from Phaeodactylum tricornutum (strain CCAP 1055/1).